Reading from the N-terminus, the 313-residue chain is 2-dehydro-3-deoxygluconokinase/2-dehydro-3-deoxygalactonokinase (313 aa).

Substrate is bound by residues 34–38 (GSELN), Tyr90, 106–108 (YYR), and Arg166. Residues 164-166 (NIR), 226-231 (KLGSKG), and 255-258 (GAGD) each bind ATP. Positions 258 and 294 each coordinate substrate. Asp258 acts as the Proton acceptor in catalysis.

As to quaternary structure, homohexamer; trimer of dimers.

The enzyme catalyses 2-dehydro-3-deoxy-D-gluconate + ATP = 2-dehydro-3-deoxy-6-phospho-D-gluconate + ADP + H(+). It catalyses the reaction 2-dehydro-3-deoxy-D-galactonate + ATP = 2-dehydro-3-deoxy-6-phospho-D-galactonate + ADP + H(+). Its pathway is carbohydrate acid metabolism; 2-dehydro-3-deoxy-D-gluconate degradation; D-glyceraldehyde 3-phosphate and pyruvate from 2-dehydro-3-deoxy-D-gluconate: step 1/2. Its function is as follows. Involved in the degradation of glucose and galactose via the semi-phosphorylative Entner-Doudoroff pathway. Catalyzes the phosphorylation of 2-keto-3-deoxygluconate (KDG) and 2-keto-3-deoxygalactonate (KDGal) to produce 2-keto-3-deoxy-6-phosphogluconate (KDPG) and 2-keto-3-deoxy-6-phosphogalactonate (KDPGal), respectively. This is 2-dehydro-3-deoxygluconokinase/2-dehydro-3-deoxygalactonokinase (kdgK) from Saccharolobus solfataricus (strain ATCC 35092 / DSM 1617 / JCM 11322 / P2) (Sulfolobus solfataricus).